The chain runs to 323 residues: Aldo-keto reductase family 1 member C3 (323 aa).

NADP(+) contacts are provided by residues 23–24 and aspartate 50; that span reads TY. Tyrosine 55 serves as the catalytic Proton donor. Position 117 (histidine 117) interacts with substrate. NADP(+) is bound by residues 166-167, glutamine 190, 216-222, 270-272, and 276-280; these read SN, YSALGSQ, KSY, and RIRQN.

This sequence belongs to the aldo/keto reductase family. In terms of tissue distribution, expressed in many tissues including adrenal gland, brain, kidney, liver, lung, mammary gland, placenta, small intestine, colon, spleen, prostate and testis. High expression in prostate and mammary gland. In the prostate, higher levels in epithelial cells than in stromal cells. In the brain, expressed in medulla, spinal cord, frontotemporal lobes, thalamus, subthalamic nuclei and amygdala. Weaker expression in the hippocampus, substantia nigra and caudate.

It localises to the cytoplasm. The catalysed reaction is a 3alpha-hydroxysteroid + NADP(+) = a 3-oxosteroid + NADPH + H(+). It carries out the reaction a 3alpha-hydroxysteroid + NAD(+) = a 3-oxosteroid + NADH + H(+). The enzyme catalyses prostaglandin F2alpha + NADP(+) = prostaglandin D2 + NADPH + H(+). It catalyses the reaction prostaglandin F2alpha + NADP(+) = prostaglandin H2 + NADPH + H(+). The catalysed reaction is prostaglandin D2 + NADPH + H(+) = 11beta-prostaglandin F2 + NADP(+). It carries out the reaction prostaglandin D2-ethanolamide + NADPH + H(+) = 11beta-prostaglandin F2-ethanolamide + NADP(+). The enzyme catalyses testosterone + NAD(+) = androst-4-ene-3,17-dione + NADH + H(+). It catalyses the reaction testosterone + NADP(+) = androst-4-ene-3,17-dione + NADPH + H(+). The catalysed reaction is 17beta-estradiol + NADP(+) = estrone + NADPH + H(+). It carries out the reaction 17beta-estradiol + NAD(+) = estrone + NADH + H(+). The enzyme catalyses (20S)-hydroxypregn-4-en-3-one + NADP(+) = progesterone + NADPH + H(+). It catalyses the reaction (20S)-hydroxypregn-4-en-3-one + NAD(+) = progesterone + NADH + H(+). The catalysed reaction is 5alpha-androstane-3alpha,17beta-diol + NADP(+) = 17beta-hydroxy-5alpha-androstan-3-one + NADPH + H(+). It carries out the reaction 5alpha-androstane-3alpha,17beta-diol + NAD(+) = 17beta-hydroxy-5alpha-androstan-3-one + NADH + H(+). The enzyme catalyses androsterone + NADPH + H(+) = 5alpha-androstane-3alpha,17beta-diol + NADP(+). It catalyses the reaction 5alpha-androstane-3alpha,17beta-diol + NAD(+) = androsterone + NADH + H(+). The catalysed reaction is 5alpha-androstane-3beta,17beta-diol + NADP(+) = 17beta-hydroxy-5alpha-androstan-3-one + NADPH + H(+). It carries out the reaction 9-cis-retinol + NADP(+) = 9-cis-retinal + NADPH + H(+). Its pathway is steroid metabolism. Strongly inhibited by nonsteroidal anti-inflammatory drugs (NSAID) including flufenamic acid and indomethacin. Also inhibited by the flavinoid, rutin, and by selective serotonin inhibitors (SSRIs). The oxidation reaction is inhibited by low micromolar concentrations of NADPH. Cytosolic aldo-keto reductase that catalyzes the NADH and NADPH-dependent reduction of ketosteroids to hydroxysteroids. Acts as a NAD(P)(H)-dependent 3-, 17- and 20-ketosteroid reductase on the steroid nucleus and side chain and regulates the metabolism of androgens, estrogens and progesterone. Displays the ability to catalyze both oxidation and reduction in vitro, but most probably acts as a reductase in vivo since the oxidase activity measured in vitro is inhibited by physiological concentration of NADPH. Acts preferentially as a 17-ketosteroid reductase and has the highest catalytic efficiency of the AKR1C enzyme for the reduction of delta4-androstenedione to form testosterone. Reduces prostaglandin (PG) D2 to 11beta-prostaglandin F2, progesterone to 20alpha-hydroxyprogesterone and estrone to 17beta-estradiol. Catalyzes the transformation of the potent androgen dihydrotestosterone (DHT) into the less active form, 5-alpha-androstan-3-alpha,17-beta-diol (3-alpha-diol). Also displays retinaldehyde reductase activity toward 9-cis-retinal. This chain is Aldo-keto reductase family 1 member C3 (AKR1C3), found in Homo sapiens (Human).